Consider the following 977-residue polypeptide: Monofunctional C1-tetrahydrofolate synthase, mitochondrial (977 aa).

Residues 1-31 constitute a mitochondrion transit peptide; sequence MSVRLPLLLRQLGRQQLPSGPACRLRELCRS. The segment at 29–71 is disordered; the sequence is CRSGSRSSSSGGGDPEGLRGRRLQDGQTFSSHGPGNPEAPGMD. The tract at residues 32-347 is methylenetetrahydrofolate dehydrogenase and cyclohydrolase; it reads GSRSSSSGGG…REQQHRRWRL (316 aa). Residue K188 is modified to N6-acetyllysine; alternate. K188 carries the post-translational modification N6-succinyllysine; alternate. The tract at residues 348-977 is formyltetrahydrofolate synthetase; the sequence is HCLKLQPLSP…TETEQVKGLF (630 aa). A Phosphoserine modification is found at S356. 422–429 contacts ATP; that stretch reads TPLGEGKS. The residue at position 595 (K595) is an N6-succinyllysine.

In the N-terminal section; belongs to the tetrahydrofolate dehydrogenase/cyclohydrolase family. This sequence in the C-terminal section; belongs to the formate--tetrahydrofolate ligase family. As to quaternary structure, homodimer.

The protein localises to the mitochondrion. It carries out the reaction (6S)-5,6,7,8-tetrahydrofolate + formate + ATP = (6R)-10-formyltetrahydrofolate + ADP + phosphate. The protein operates within one-carbon metabolism; tetrahydrofolate interconversion. In terms of biological role, may provide the missing metabolic reaction required to link the mitochondria and the cytoplasm in the mammalian model of one-carbon folate metabolism complementing thus the enzymatic activities of MTHFD2. This chain is Monofunctional C1-tetrahydrofolate synthase, mitochondrial (Mthfd1l), found in Mus musculus (Mouse).